Here is a 1344-residue protein sequence, read N- to C-terminus: Xanthine dehydrogenase (1344 aa).

In terms of domain architecture, 2Fe-2S ferredoxin-type spans 9-96 (SVLVFFVNGK…GCAVTTVEGI (88 aa)). 8 residues coordinate [2Fe-2S] cluster: Cys-48, Cys-53, Cys-56, Cys-78, Cys-118, Cys-121, Cys-153, and Cys-155. The FAD-binding PCMH-type domain occupies 236 to 425 (FSSERVTWYR…LGIHFQKTTP (190 aa)). Residues 264-271 (LVVGNTEV), Phe-344, 354-358 (CLGGN), Asp-367, Leu-415, and Lys-433 each bind FAD. 2 residues coordinate Mo-molybdopterin: Gln-781 and Phe-812. Substrate contacts are provided by Glu-816 and Arg-894. Arg-926 serves as a coordination point for Mo-molybdopterin. A substrate-binding site is contributed by Phe-928. Ala-1093 contributes to the Mo-molybdopterin binding site. Glu-1276 serves as the catalytic Proton acceptor.

Belongs to the xanthine dehydrogenase family. As to quaternary structure, homodimer. The cofactor is FAD. Mo-molybdopterin serves as cofactor. [2Fe-2S] cluster is required as a cofactor.

The protein localises to the peroxisome. It catalyses the reaction xanthine + NAD(+) + H2O = urate + NADH + H(+). The enzyme catalyses hypoxanthine + NAD(+) + H2O = xanthine + NADH + H(+). Functionally, key enzyme in purine degradation. Catalyzes the oxidation of hypoxanthine to xanthine. Catalyzes the oxidation of xanthine to uric acid. This chain is Xanthine dehydrogenase (Xdh), found in Drosophila subobscura (Fruit fly).